A 66-amino-acid chain; its full sequence is Large ribosomal subunit protein bL35 (66 aa).

The segment covering 1 to 26 (MPKMKTHRGSAKRFKKTASGKLKRGH) has biased composition (basic residues). Positions 1-29 (MPKMKTHRGSAKRFKKTASGKLKRGHAYT) are disordered.

Belongs to the bacterial ribosomal protein bL35 family.

This chain is Large ribosomal subunit protein bL35, found in Geobacillus kaustophilus (strain HTA426).